Consider the following 492-residue polypeptide: NADH-ubiquinone oxidoreductase chain 4 (492 aa).

The next 15 membrane-spanning stretches (helical) occupy residues Leu9–Ala29, Asn36–Phe56, Phe63–Ile83, Ile86–Trp106, Asp115–Asp135, Leu136–Val156, Phe170–Phe190, Ile211–His231, Pro242–Leu262, Phe269–Ile289, Ile304–Asn324, Ile332–Leu352, Val370–Gly390, Thr410–Phe430, and Phe454–Phe474.

This sequence belongs to the complex I subunit 4 family.

It is found in the mitochondrion membrane. The enzyme catalyses a ubiquinone + NADH + 5 H(+)(in) = a ubiquinol + NAD(+) + 4 H(+)(out). Its function is as follows. Core subunit of the mitochondrial membrane respiratory chain NADH dehydrogenase (Complex I) that is believed to belong to the minimal assembly required for catalysis. Complex I functions in the transfer of electrons from NADH to the respiratory chain. The immediate electron acceptor for the enzyme is believed to be ubiquinone. The protein is NADH-ubiquinone oxidoreductase chain 4 (ND4) of Chondrus crispus (Carrageen Irish moss).